Consider the following 277-residue polypeptide: Small ribosomal subunit protein uS2 (277 aa).

The disordered stretch occupies residues 226–277 (GQQARADRGEDLGAAVEPVAEPALVEEAAAPVTEDEQVPAEAAAETERQSDA). The span at 239–257 (AAVEPVAEPALVEEAAAPV) shows a compositional bias: low complexity.

It belongs to the universal ribosomal protein uS2 family.

In Sphingopyxis alaskensis (strain DSM 13593 / LMG 18877 / RB2256) (Sphingomonas alaskensis), this protein is Small ribosomal subunit protein uS2.